We begin with the raw amino-acid sequence, 345 residues long: Uroporphyrinogen decarboxylase (345 aa).

Substrate contacts are provided by residues 27 to 31 (RQAGR), phenylalanine 46, aspartate 76, tyrosine 152, serine 207, and histidine 321.

The protein belongs to the uroporphyrinogen decarboxylase family. As to quaternary structure, homodimer.

It is found in the cytoplasm. The enzyme catalyses uroporphyrinogen III + 4 H(+) = coproporphyrinogen III + 4 CO2. It functions in the pathway porphyrin-containing compound metabolism; protoporphyrin-IX biosynthesis; coproporphyrinogen-III from 5-aminolevulinate: step 4/4. Functionally, catalyzes the decarboxylation of four acetate groups of uroporphyrinogen-III to yield coproporphyrinogen-III. This chain is Uroporphyrinogen decarboxylase, found in Staphylococcus aureus (strain bovine RF122 / ET3-1).